We begin with the raw amino-acid sequence, 292 residues long: MLSRDQHCFTFAKRFSFLVCIRIVNMIVVKVGGSDGIDYDAVCADLAERWQAGEKLILVHGGSGETNRVAEALGHPPKFVTSPSGYTSRFTDRQTLEIFEMVYCGKMNKGLVERLQRLGVNAVGLSGLDGRIFEGKHKDSVRSVENGKVKVLRGDHTGTVEKVNTGLIELLLGAGYLPVLTPPAASYEGVAINVDGDRAAAQLAAALRAEALLLLSNVPGLLRDYPDEASLIREIPANDVESYLEFAQDRMKKKVLGAAEAVAGGVGRVVFGDARAGKPISAALAGEGTVVS.

Substrate-binding residues include arginine 89 and asparagine 193.

The protein belongs to the acetylglutamate kinase family. LysZ subfamily.

The protein localises to the cytoplasm. The enzyme catalyses [amino-group carrier protein]-C-terminal-N-(1,4-dicarboxybutan-1-yl)-L-glutamine + ATP = [amino-group carrier protein]-C-terminal-N-(1-carboxy-5-phosphooxy-5-oxopentan-1-yl)-L-glutamine + ADP. It participates in amino-acid biosynthesis; L-lysine biosynthesis via AAA pathway; L-lysine from L-alpha-aminoadipate (Thermus route): step 2/5. Catalyzes the phosphorylation of LysW-gamma-alpha-aminoadipate. This is [LysW]-aminoadipate kinase from Deinococcus radiodurans (strain ATCC 13939 / DSM 20539 / JCM 16871 / CCUG 27074 / LMG 4051 / NBRC 15346 / NCIMB 9279 / VKM B-1422 / R1).